Reading from the N-terminus, the 84-residue chain is Small ribosomal subunit protein uS17 (84 aa).

The protein belongs to the universal ribosomal protein uS17 family. As to quaternary structure, part of the 30S ribosomal subunit.

Functionally, one of the primary rRNA binding proteins, it binds specifically to the 5'-end of 16S ribosomal RNA. The protein is Small ribosomal subunit protein uS17 of Alkaliphilus metalliredigens (strain QYMF).